Consider the following 606-residue polypeptide: Gamma-aminobutyric acid receptor subunit beta (606 aa).

Positions 1–44 are cleaved as a signal peptide; that stretch reads MSDSKMDKLARMAPLPRTPLLTIWLAINMALIAQETGHKRIHTV. At 45–268 the chain is on the extracellular side; it reads QAATGGGSML…CEIQFVRSMG (224 aa). Asn58 is a glycosylation site (N-linked (GlcNAc...) asparagine). An intrachain disulfide couples Cys185 to Cys199. N-linked (GlcNAc...) asparagine glycosylation is present at Asn253. A run of 3 helical transmembrane segments spans residues 269-291, 297-316, and 333-356; these read YYLI…SFWL, PARV…LMSS, and YLGT…YMAK. Residues 357 to 568 are Cytoplasmic-facing; the sequence is RIQMRKQRFM…LGITPSDIDK (212 aa). Disordered stretches follow at residues 376–451 and 482–542; these read KQQL…VSNR and HDPK…AAVP. Residues 381–395 show a composition bias toward low complexity; the sequence is GANQQQANPNPNANV. The span at 396 to 425 shows a compositional bias: gly residues; the sequence is GGPGGVGVGPGGPGGPGGGVNVGVGMGMGP. Positions 430 to 443 are enriched in basic residues; it reads GHGHHAHSHGHPHA. The span at 499–536 shows a compositional bias: gly residues; sequence GGRGGPQSHGPGPGQGGGPPGGGGGGGGGGGPPEGGGD. Residues 569 to 590 traverse the membrane as a helical segment; sequence YSRIVFPVCFVCFNLMYWIIYL.

It belongs to the ligand-gated ion channel (TC 1.A.9) family. Gamma-aminobutyric acid receptor (TC 1.A.9.5) subfamily. Forms oligomers. Interacts with Nlg4; the interaction mediates Rdl clustering. Interacts with Fbxl4; the interaction mediates Rdl degradation. As to expression, expressed in different parts of the brain: the mushroom bodies (alpha, alpha', beta, beta', gamma lobes and peduncles), the neurons projecting to the columnar-type neuron LC9 optic glomerulus, in interneurons connecting the paired olfactory lobes, antennal lobes, PDF-expressing small and large ventral lateral neurons (LNvs) of the circadian clock and lobula columnar neuron 11 (LC11) (at protein level). Expressed in all major ON pathway medulla neurons (Mi1, Tm3, Mi4, and Mi9) and in OFF pathway neurons (Tm1, Tm2, Tm4, and Tm9).

Its subcellular location is the cell membrane. The protein resides in the postsynaptic cell membrane. It is found in the cell projection. The protein localises to the dendrite. It localises to the axon. Its activity is regulated as follows. Activated by agonist muscimol. Insensitive to zinc, glycine, glutamate, and baclofen, loreclezole, to antagonist bicuculline, glycine-receptor antagonist strychnine, and nonselective GABA and glycine antagonist RU 5135. Insensitive to flunitrazepam, pentobarbitone or pregnane steroids such as 5alpha-pregnan-3alpha-ol-20-one. Inhibited by insecticides picrotoxin (PTX), cyclodiene dieldrin, TBPS and lindane. Inhibited by ivermectin, fipronil and pyrafluprole. With respect to regulation, inhibited by insecticides picrotoxin (PTX). Gamma-aminobutyric acid (GABA) receptor voltage channel subunit. GABA, an inhibitory neurotransmitter, mediates neuronal inhibition by binding to the GABA receptor and opening an integral chloride channel. Together with glutamate receptor GluClalpha, plays an important role in the visual response by regulating the activity of ON/OFF-selective neurons. Plays a role in promoting sleep and sleep latency by regulating the activity of peptidergic PDF neurons. In large ventral lateral clock neurons, clustering is mediated by Nlg4 and protein levels undergo daily degradation in response to the circadian clock. In neurons in the mushroom bodies, has a role in odor memory acquisition where it inhibits appetitive and aversive olfactory learning, probably upstream of Adcy1/adenylate cyclase 1 and GTPase activating protein Nf1. In male-specific GABAergic neurons, plays a role in inhibiting male aggressive behavior during courtship. In terms of biological role, gamma-aminobutyric acid (GABA) receptor voltage channel subunit. This chain is Gamma-aminobutyric acid receptor subunit beta (Rdl), found in Drosophila melanogaster (Fruit fly).